We begin with the raw amino-acid sequence, 211 residues long: Acyl-homoserine-lactone synthase (211 aa).

Belongs to the autoinducer synthase family.

The enzyme catalyses a fatty acyl-[ACP] + S-adenosyl-L-methionine = an N-acyl-L-homoserine lactone + S-methyl-5'-thioadenosine + holo-[ACP] + H(+). Required for the synthesis of OHHL (N-(3-oxohexanoyl)-L-homoserine lactone), an autoinducer molecule which binds to TraR and thus acts in the control of conjugal transfer. The chain is Acyl-homoserine-lactone synthase (traI) from Agrobacterium fabrum (strain C58 / ATCC 33970) (Agrobacterium tumefaciens (strain C58)).